The primary structure comprises 252 residues: Indole-3-glycerol phosphate synthase (252 aa).

The protein belongs to the TrpC family.

It carries out the reaction 1-(2-carboxyphenylamino)-1-deoxy-D-ribulose 5-phosphate + H(+) = (1S,2R)-1-C-(indol-3-yl)glycerol 3-phosphate + CO2 + H2O. It participates in amino-acid biosynthesis; L-tryptophan biosynthesis; L-tryptophan from chorismate: step 4/5. The chain is Indole-3-glycerol phosphate synthase from Listeria monocytogenes serotype 4a (strain HCC23).